The following is a 494-amino-acid chain: MFQVQKELASHEAVVVALFEEEKTSSFVQELDKAFEGQLQVLLEEKELSTKKKAISKVHSLGKTDVKRYYFVGLGKKESYTTETLRSALGKTFKTLQAAKVQDAAILLDSFVTEKLDAIDVAHIAAEVQGLGTYELQTYKSDKKDRVELEKFTAITAEDAQEIEAALTVGYVHGRATNSARTLVNMPPNVLTATKLAEYAVELAEKYDMDYKVLEKEEMEELGMGALLAVNQGSVEPPKMIALIYKGKEEWTDVIGFVGKGITYDTGGYSLKPREGMVGMKGDMGGAAAVLGAMEIIGELRPEQNVIAVIPSTDNVVSGTAFKPDDVITSMSGKTIEVLNTDAEGRLALADGITYAKKLGANYLIDVATLTGGVIVALGNHTTGAMTNNEELFEQVLEASMETDESIWQLPIFDRDKERVRNSKFADLNNSPGREGHAVMAGTFIGEFAEDTPWVHLDIAGTSESSGAHDLGPAGATGAMVRTLATLVERFGEE.

Lysine 260 and aspartate 265 together coordinate Mn(2+). The active site involves lysine 272. Residues aspartate 283, aspartate 342, and glutamate 344 each contribute to the Mn(2+) site. Arginine 346 is an active-site residue.

This sequence belongs to the peptidase M17 family. It depends on Mn(2+) as a cofactor.

The protein resides in the cytoplasm. The enzyme catalyses Release of an N-terminal amino acid, Xaa-|-Yaa-, in which Xaa is preferably Leu, but may be other amino acids including Pro although not Arg or Lys, and Yaa may be Pro. Amino acid amides and methyl esters are also readily hydrolyzed, but rates on arylamides are exceedingly low.. It carries out the reaction Release of an N-terminal amino acid, preferentially leucine, but not glutamic or aspartic acids.. Presumably involved in the processing and regular turnover of intracellular proteins. Catalyzes the removal of unsubstituted N-terminal amino acids from various peptides. This chain is Probable cytosol aminopeptidase, found in Bacillus anthracis (strain CDC 684 / NRRL 3495).